A 385-amino-acid polypeptide reads, in one-letter code: Guanine nucleotide-binding protein alpha-5 subunit (385 aa).

Glycine 2 is lipidated: N-myristoyl glycine. Cysteine 6 carries the S-palmitoyl cysteine lipid modification. Positions 32 to 385 (RKIKMLLLGI…NKNIETLSLE (354 aa)) constitute a G-alpha domain. The interval 35 to 48 (KMLLLGISDSGKST) is G1 motif. GTP contacts are provided by residues 40 to 47 (GISDSGKS), 174 to 180 (IHMRQTT), 199 to 203 (DVGGQ), 298 to 301 (NKID), and alanine 357. Residues serine 47 and threonine 180 each coordinate Mg(2+). Positions 172-180 (DLIHMRQTT) are G2 motif. The segment at 195–204 (IRLIDVGGQK) is G3 motif. Residues 294–301 (MLFLNKID) are G4 motif. The tract at residues 355-360 (TQATIT) is G5 motif.

Belongs to the G-alpha family. In terms of assembly, g proteins are composed of 3 units; alpha, beta and gamma. The alpha chain contains the guanine nucleotide binding site.

Functionally, guanine nucleotide-binding proteins (G proteins) are involved as modulators or transducers in various transmembrane signaling systems. This is Guanine nucleotide-binding protein alpha-5 subunit (gpa-5) from Caenorhabditis briggsae.